Here is a 1442-residue protein sequence, read N- to C-terminus: DNA-binding protein RFX7 (1442 aa).

The interval Met1–Ala36 is disordered. Residues Ala112 to Ala187 constitute a DNA-binding region (RFX-type winged-helix). The short motif at Pro192–Leu197 is the PxLPxI/L motif element. Disordered stretches follow at residues Met406–Ser426, Ser485–Ser514, and Ser929–Pro1001. Pro residues predominate over residues Thr935–Thr947. Positions Gly957–Cys995 are enriched in polar residues.

It belongs to the RFX family.

The protein localises to the nucleus. Transcription factor. Acts as a transcriptional activator by binding to promoter regions of target genes. Plays a role in natural killer (NK) cell maintenance and immunity. Plays a role in the process of ciliogenesis in the neural tube and neural tube closure by regulating the expression of RFX4. This is DNA-binding protein RFX7 from Xenopus laevis (African clawed frog).